We begin with the raw amino-acid sequence, 215 residues long: Oligoribonuclease (215 aa).

The Exonuclease domain occupies Leu5–Leu170. Tyr127 is a catalytic residue. Positions Leu196–Gly215 are disordered. The span at Ala202–Gly215 shows a compositional bias: low complexity.

Belongs to the oligoribonuclease family.

The protein resides in the cytoplasm. Its function is as follows. 3'-to-5' exoribonuclease specific for small oligoribonucleotides. The sequence is that of Oligoribonuclease from Mycobacterium avium (strain 104).